The sequence spans 154 residues: Myoglobin (154 aa).

The region spanning 2–148 (GLSDGEWQIV…FRNDIAAKYK (147 aa)) is the Globin domain. The residue at position 4 (Ser-4) is a Phosphoserine. His-65 contributes to the nitrite binding site. His-65 is an O2 binding site. A Phosphothreonine modification is found at Thr-68. Residue His-94 participates in heme b binding.

Belongs to the globin family. In terms of assembly, monomeric.

It localises to the cytoplasm. The protein resides in the sarcoplasm. The enzyme catalyses Fe(III)-heme b-[protein] + nitric oxide + H2O = Fe(II)-heme b-[protein] + nitrite + 2 H(+). It carries out the reaction H2O2 + AH2 = A + 2 H2O. Its function is as follows. Monomeric heme protein which primary function is to store oxygen and facilitate its diffusion within muscle tissues. Reversibly binds oxygen through a pentacoordinated heme iron and enables its timely and efficient release as needed during periods of heightened demand. Depending on the oxidative conditions of tissues and cells, and in addition to its ability to bind oxygen, it also has a nitrite reductase activity whereby it regulates the production of bioactive nitric oxide. Under stress conditions, like hypoxia and anoxia, it also protects cells against reactive oxygen species thanks to its pseudoperoxidase activity. This chain is Myoglobin (MB), found in Canis lupus familiaris (Dog).